We begin with the raw amino-acid sequence, 418 residues long: Histidine--tRNA ligase (418 aa).

The protein belongs to the class-II aminoacyl-tRNA synthetase family.

The protein localises to the cytoplasm. It catalyses the reaction tRNA(His) + L-histidine + ATP = L-histidyl-tRNA(His) + AMP + diphosphate + H(+). The chain is Histidine--tRNA ligase from Methanococcus vannielii (strain ATCC 35089 / DSM 1224 / JCM 13029 / OCM 148 / SB).